The following is a 200-amino-acid chain: Prolactin-2 (200 aa).

The first 23 residues, 1 to 23, serve as a signal peptide directing secretion; that stretch reads MRQRRISGSNLMMVLCVVAMCRA. Intrachain disulfides connect cysteine 64–cysteine 173 and cysteine 190–cysteine 200.

This sequence belongs to the somatotropin/prolactin family.

The protein localises to the secreted. The sequence is that of Prolactin-2 (prl2) from Oreochromis mossambicus (Mozambique tilapia).